The following is a 147-amino-acid chain: Protein phosphatase 1 regulatory subunit 14A (147 aa).

Residues 1–11 (MAAQRLGKRVL) are compositionally biased toward basic residues. The segment at 1–36 (MAAQRLGKRVLSKLQSPSRARGPGGSPSGLQKRHAR) is disordered. Phosphoserine is present on S26. An inhibitory region spans residues 35–120 (ARVTVKYDRR…LLAKLRGLHK (86 aa)). Residue T38 is modified to Phosphothreonine; by PKC. The segment at 118 to 147 (LHKQPGFPQPSPSDDPSLSPRQDRAHTAPP) is disordered. Phosphoserine occurs at positions 128, 134, and 136. Positions 138–147 (RQDRAHTAPP) are enriched in basic and acidic residues.

It belongs to the PP1 inhibitor family.

The protein resides in the cytoplasm. In terms of biological role, inhibitor of PPP1CA. Has over 1000-fold higher inhibitory activity when phosphorylated, creating a molecular switch for regulating the phosphorylation status of PPP1CA substrates and smooth muscle contraction. This chain is Protein phosphatase 1 regulatory subunit 14A (Ppp1r14a), found in Mus musculus (Mouse).